The sequence spans 256 residues: Ribonuclease 3 (256 aa).

In terms of domain architecture, RNase III spans 3–125; the sequence is LDALQQRLGY…IFGAVFLDGG (123 aa). Glutamate 38 contributes to the Mg(2+) binding site. The active site involves aspartate 42. Aspartate 111 and glutamate 114 together coordinate Mg(2+). Glutamate 114 is a catalytic residue. One can recognise a DRBM domain in the interval 152 to 222; the sequence is DAKTLLQEYL…AKLALDEAHR (71 aa). The disordered stretch occupies residues 226–256; it reads QLVKRSRAERTGKTRKQATPPDPQLSLRLKE.

The protein belongs to the ribonuclease III family. In terms of assembly, homodimer. The cofactor is Mg(2+).

It localises to the cytoplasm. The enzyme catalyses Endonucleolytic cleavage to 5'-phosphomonoester.. In terms of biological role, digests double-stranded RNA. Involved in the processing of primary rRNA transcript to yield the immediate precursors to the large and small rRNAs (23S and 16S). Processes some mRNAs, and tRNAs when they are encoded in the rRNA operon. Processes pre-crRNA and tracrRNA of type II CRISPR loci if present in the organism. This is Ribonuclease 3 from Ralstonia pickettii (strain 12J).